The sequence spans 393 residues: MAEIQSNGRAYESLLEKVLSMNILSSDYFKELYGLKTYHEVIDEIYNQVNHVEPWMGGNCRGPSTAYCLLYKFFTMKLTVKQMHGLLKHTDSPYIRAVGFLYLRYVADAKTLWTWYEPYIKDDEEFSPGSNGRMTTMGVYVRDLLLGLYYFDTLFPRIPVPVMRQIVSNLEKMNLPTKPSGSTGDMTRGSEDTARRPPSVKASLSVSFGQRAPHRASTRGSSPVRRPPPTGYDRNGGDEVQQRSPRRSQSRDYYSDRDSDRQREREREKDRERERGRDRYRERERDYGNDRRSRRDYDSRSRRNDYEDDRSRHDRRSRSRSRSRSRSVQIEREPTPKRDSSNKEKSAVTVNSNLAKLKDLYGDASSQKRDEGFGTRKDSSSEEVIKLGGSSWR.

Positions 173 to 393 (MNLPTKPSGS…VIKLGGSSWR (221 aa)) are disordered. The segment covering 249–312 (QSRDYYSDRD…RNDYEDDRSR (64 aa)) has biased composition (basic and acidic residues). The short motif at 301–308 (SRRNDYED) is the Nuclear localization signal element. Basic residues predominate over residues 313–325 (HDRRSRSRSRSRS). 2 stretches are compositionally biased toward basic and acidic residues: residues 329–346 (QIER…KEKS) and 356–385 (KLKD…EEVI).

The protein belongs to the PRP38 family. In terms of processing, phosphorylated. Mostly expressed in siliques and leaves, also present in seedlings, flowers and stems, and, at low levels, in roots.

Its subcellular location is the nucleus. In terms of biological role, may be required for pre-mRNA splicing. Confers salt tolerance to LiCl and NaCl. This Arabidopsis thaliana (Mouse-ear cress) protein is Pre-mRNA splicing factor SR-like 1.